Here is a 1159-residue protein sequence, read N- to C-terminus: RNA-directed RNA polymerase (1159 aa).

One can recognise a RdRp catalytic domain in the interval 545-727; it reads LTYGVLAEDT…KALASYTGLE (183 aa).

It belongs to the reoviridae RNA-directed RNA polymerase family. In terms of assembly, interacts with VP3 (Potential). Interacts with VP2 (Potential). Interacts with NSP5; this interaction is probably necessary for the formation of functional virus factories.

It localises to the virion. The catalysed reaction is RNA(n) + a ribonucleoside 5'-triphosphate = RNA(n+1) + diphosphate. Functionally, RNA-directed RNA polymerase that is involved in both transcription and genome replication. Together with VP3 capping enzyme, forms an enzyme complex positioned near the channels situated at each of the five-fold vertices of the core. Following infection, the outermost layer of the virus is lost, leaving a double-layered particle (DLP) made up of the core and VP6 shell. VP1 then catalyzes the transcription of fully conservative plus-strand genomic RNAs that are extruded through the DLP's channels into the cytoplasm where they function as mRNAs for translation of viral proteins. One copy of each of the viral (+)RNAs is also recruited during core assembly, together with newly synthesized polymerase complexes and VP2. The polymerase of these novo-formed particles catalyzes the synthesis of complementary minus-strands leading to dsDNA formation. To do so, the polymerase specifically recognizes conserved 3' sequence(s) in plus-strand RNA templates. Once dsRNA synthesis is complete, the polymerase switches to the transcriptional mode, thus providing secondary transcription. This is RNA-directed RNA polymerase from Homo sapiens (Human).